Consider the following 272-residue polypeptide: Tryptophan synthase alpha chain (272 aa).

Residues Glu-53 and Asp-64 each act as proton acceptor in the active site.

Belongs to the TrpA family. In terms of assembly, tetramer of two alpha and two beta chains.

The catalysed reaction is (1S,2R)-1-C-(indol-3-yl)glycerol 3-phosphate + L-serine = D-glyceraldehyde 3-phosphate + L-tryptophan + H2O. Its pathway is amino-acid biosynthesis; L-tryptophan biosynthesis; L-tryptophan from chorismate: step 5/5. Functionally, the alpha subunit is responsible for the aldol cleavage of indoleglycerol phosphate to indole and glyceraldehyde 3-phosphate. This is Tryptophan synthase alpha chain from Xanthomonas campestris pv. campestris (strain B100).